Consider the following 181-residue polypeptide: Protein Syd (181 aa).

Belongs to the Syd family.

Its subcellular location is the cell inner membrane. Its function is as follows. Interacts with the SecY protein in vivo. May bind preferentially to an uncomplexed state of SecY, thus functioning either as a chelating agent for excess SecY in the cell or as a regulatory factor that negatively controls the translocase function. This chain is Protein Syd, found in Shigella flexneri serotype 5b (strain 8401).